Consider the following 138-residue polypeptide: Large ribosomal subunit protein bL19 (138 aa).

Belongs to the bacterial ribosomal protein bL19 family.

Its function is as follows. This protein is located at the 30S-50S ribosomal subunit interface and may play a role in the structure and function of the aminoacyl-tRNA binding site. The polypeptide is Large ribosomal subunit protein bL19 (Leptospira interrogans serogroup Icterohaemorrhagiae serovar copenhageni (strain Fiocruz L1-130)).